Consider the following 284-residue polypeptide: MLSDCEFDAARDTIRRALHEDLRYGLDITTQATVPAGTVVTGSMVPREPGVIAGVDVALLVLDEVFGVDGYRVLYRVEDGARLQSGQPLLTVQAAARGLLTAERTMLNLVCHMSGIATVTVAWVDAVRGTKAKIRDTRKTLPGLRALQKYAVRVGGGVNHRLGLGDTALIKDNHVAAVGSVVDALRAVRAAAPELPCEVEVDSLEQLDAMLAEEPELILLDNFPVWQTQVAVQRRDIRAPTVLLESSGGLSLENAAIYAGTGVDYLAVGALTHSVRILDIGLDL.

Substrate-binding positions include Arg104, 137 to 139, Arg161, Lys171, Glu200, Asp221, 247 to 249, and 268 to 270; these read TRK, SGG, and VGA.

The protein belongs to the NadC/ModD family. In terms of assembly, hexamer formed by 3 homodimers.

It carries out the reaction nicotinate beta-D-ribonucleotide + CO2 + diphosphate = quinolinate + 5-phospho-alpha-D-ribose 1-diphosphate + 2 H(+). Its pathway is cofactor biosynthesis; NAD(+) biosynthesis; nicotinate D-ribonucleotide from quinolinate: step 1/1. Its function is as follows. Involved in the catabolism of quinolinic acid (QA). The polypeptide is Nicotinate-nucleotide pyrophosphorylase [carboxylating] (nadC) (Mycobacterium leprae (strain TN)).